Reading from the N-terminus, the 727-residue chain is MTSNDPADPADRAEFDDAAVAGMTSEAEAGATAEGVEDVPAGVRERYADLVEQVRAHQFRYYVLDSPTISDGEFDELFTELQTLESDHPALRDPDSPTQVVGGTFSTDFTAVDHLERMLSLDNAFDPDELRAWVERVEREVGSSAHYLCELKIDGLAINLLYRDGKLERALTRGDGRTGEDVTLNVRTMDDVPDQLTGTDEYPVPALVEIRGEVFFRVDEFAQLNASLVEAGKPPFANPRNSAAGSLRQKDPRVTKSRPLRMICHGLGKREGFEPKQQSESYAALRAWGLRVSPHTKVLSTVDEVLEHIDYWGKHRNSAEHEIDGVVVKVDEVSLQRRLGATSRAPRWSIAYKYPPEQATTRLLDIQVAVGRTGRVTPYAVMEPVKVAGSTVARATLHNADQVRHKGVLIGDRVVIRKAGDVIPEVLGPVVDVRDGSEREFVMPTECPDCGTALAHQKEGDVDLRCPNSHNCIGQRRERLFQLAGRKAFDIEVLGYEGVSALLSAGVVFDEGDLFDLNEEALLKTTLFRTDDGSLSVNGGKLLANLESAKQQPLWRVLVALSIRHVGPIAARVLAREFGSLDRIQEASEEELAAGEGVGPTIATAVREWFDVDWHREIVRKWSEAGVRMADERDESIERHLTGLSIVVTGSLEGFSRDEAKELIMARGGRAAGSVSKKTAFVVVGESPGSKYDKAVQMKVPVLDEDGFRVLLEQGPEAAAEAALPAE.

NAD(+) contacts are provided by residues 71 to 75 (DGEFD), 120 to 121 (SL), and glutamate 150. Lysine 152 serves as the catalytic N6-AMP-lysine intermediate. The NAD(+) site is built by arginine 173, glutamate 213, lysine 329, and lysine 353. The Zn(2+) site is built by cysteine 447, cysteine 450, cysteine 466, and cysteine 472. The region spanning 636-725 (SIERHLTGLS…PEAAAEAALP (90 aa)) is the BRCT domain.

The protein belongs to the NAD-dependent DNA ligase family. LigA subfamily. Requires Mg(2+) as cofactor. Mn(2+) is required as a cofactor.

The catalysed reaction is NAD(+) + (deoxyribonucleotide)n-3'-hydroxyl + 5'-phospho-(deoxyribonucleotide)m = (deoxyribonucleotide)n+m + AMP + beta-nicotinamide D-nucleotide.. Functionally, DNA ligase that catalyzes the formation of phosphodiester linkages between 5'-phosphoryl and 3'-hydroxyl groups in double-stranded DNA using NAD as a coenzyme and as the energy source for the reaction. It is essential for DNA replication and repair of damaged DNA. The polypeptide is DNA ligase (Saccharopolyspora erythraea (strain ATCC 11635 / DSM 40517 / JCM 4748 / NBRC 13426 / NCIMB 8594 / NRRL 2338)).